The sequence spans 230 residues: Large ribosomal subunit protein uL1 (230 aa).

Belongs to the universal ribosomal protein uL1 family. Part of the 50S ribosomal subunit.

Its function is as follows. Binds directly to 23S rRNA. The L1 stalk is quite mobile in the ribosome, and is involved in E site tRNA release. Protein L1 is also a translational repressor protein, it controls the translation of the L11 operon by binding to its mRNA. The protein is Large ribosomal subunit protein uL1 of Onion yellows phytoplasma (strain OY-M).